A 299-amino-acid chain; its full sequence is ATP phosphoribosyltransferase (299 aa).

The protein belongs to the ATP phosphoribosyltransferase family. Long subfamily. It depends on Mg(2+) as a cofactor.

Its subcellular location is the cytoplasm. It carries out the reaction 1-(5-phospho-beta-D-ribosyl)-ATP + diphosphate = 5-phospho-alpha-D-ribose 1-diphosphate + ATP. It functions in the pathway amino-acid biosynthesis; L-histidine biosynthesis; L-histidine from 5-phospho-alpha-D-ribose 1-diphosphate: step 1/9. Feedback inhibited by histidine. Catalyzes the condensation of ATP and 5-phosphoribose 1-diphosphate to form N'-(5'-phosphoribosyl)-ATP (PR-ATP). Has a crucial role in the pathway because the rate of histidine biosynthesis seems to be controlled primarily by regulation of HisG enzymatic activity. This Campylobacter lari (strain RM2100 / D67 / ATCC BAA-1060) protein is ATP phosphoribosyltransferase.